We begin with the raw amino-acid sequence, 1801 residues long: U3 small nucleolar RNA-associated protein 10 (1801 aa).

Helical transmembrane passes span 102 to 122 (LALV…EWLI) and 136 to 156 (ILTF…AILP). Residues 581–619 (DVDVQALLPFMLIALADPSERVRSGAVDALANIGKVVDK) form an HEAT 1 repeat. A run of 2 helical transmembrane segments spans residues 939 to 959 (IQSG…AIVN) and 995 to 1015 (ALLL…HSVM). HEAT repeat units lie at residues 1038–1076 (DQTI…AFEH), 1110–1148 (YSMD…DSLK), 1244–1282 (TLTT…QSPE), 1288–1327 (QTRM…KYGK), and 1756–1794 (LALL…VLGE).

It belongs to the HEATR1/UTP10 family. As to quaternary structure, component of the ribosomal small subunit (SSU) processome.

It localises to the nucleus. The protein resides in the nucleolus. The protein localises to the membrane. In terms of biological role, involved in nucleolar processing of pre-18S ribosomal RNA. Involved in ribosome biosynthesis. The protein is U3 small nucleolar RNA-associated protein 10 of Emericella nidulans (strain FGSC A4 / ATCC 38163 / CBS 112.46 / NRRL 194 / M139) (Aspergillus nidulans).